A 458-amino-acid chain; its full sequence is UDP-N-acetylmuramoylalanine--D-glutamate ligase (458 aa).

124–130 (GSDGKTT) contacts ATP.

The protein belongs to the MurCDEF family.

It is found in the cytoplasm. It catalyses the reaction UDP-N-acetyl-alpha-D-muramoyl-L-alanine + D-glutamate + ATP = UDP-N-acetyl-alpha-D-muramoyl-L-alanyl-D-glutamate + ADP + phosphate + H(+). The protein operates within cell wall biogenesis; peptidoglycan biosynthesis. Its function is as follows. Cell wall formation. Catalyzes the addition of glutamate to the nucleotide precursor UDP-N-acetylmuramoyl-L-alanine (UMA). This chain is UDP-N-acetylmuramoylalanine--D-glutamate ligase, found in Clostridium tetani (strain Massachusetts / E88).